The primary structure comprises 360 residues: Phenylalanine--tRNA ligase alpha subunit (360 aa).

Position 260 (Glu260) interacts with Mg(2+).

This sequence belongs to the class-II aminoacyl-tRNA synthetase family. Phe-tRNA synthetase alpha subunit type 1 subfamily. Tetramer of two alpha and two beta subunits. Mg(2+) serves as cofactor.

It is found in the cytoplasm. It carries out the reaction tRNA(Phe) + L-phenylalanine + ATP = L-phenylalanyl-tRNA(Phe) + AMP + diphosphate + H(+). In Bradyrhizobium diazoefficiens (strain JCM 10833 / BCRC 13528 / IAM 13628 / NBRC 14792 / USDA 110), this protein is Phenylalanine--tRNA ligase alpha subunit.